A 335-amino-acid chain; its full sequence is HTH-type transcriptional regulator RipA (335 aa).

An HTH araC/xylS-type domain is found at 119–216; it reads RKVAQKLIAY…GDTPSSFTSP (98 aa). DNA-binding regions (H-T-H motif) lie at residues 136–157 and 183–206; these read LEFA…VAST and IGQV…KRHT.

Under iron limitation, represses the acn (aconitase), catA (catechol 1,2 dioxygenase), leuCD (isopropylmalate dehydratase), narKGHJI (nitrite/nitrate transporter and nitrate reductase), sdhCAB (succinate dehydrogenase), pta (phosphotransacetylase) and katA (catalase) genes. This Corynebacterium diphtheriae (strain ATCC 700971 / NCTC 13129 / Biotype gravis) protein is HTH-type transcriptional regulator RipA.